A 141-amino-acid polypeptide reads, in one-letter code: Methylglyoxal synthase (141 aa).

The MGS-like domain occupies 1-141; it reads MNIALIAHDK…PKLQKNKSDK (141 aa). Residues histidine 8, lysine 12, and 34–37 each bind substrate; that span reads TGTT. Catalysis depends on aspartate 60, which acts as the Proton donor/acceptor. Residue histidine 87 coordinates substrate.

This sequence belongs to the methylglyoxal synthase family.

It carries out the reaction dihydroxyacetone phosphate = methylglyoxal + phosphate. In terms of biological role, catalyzes the formation of methylglyoxal from dihydroxyacetone phosphate. The protein is Methylglyoxal synthase of Caldicellulosiruptor bescii (strain ATCC BAA-1888 / DSM 6725 / KCTC 15123 / Z-1320) (Anaerocellum thermophilum).